We begin with the raw amino-acid sequence, 449 residues long: MPNLEELWAYLNDKFREELTPVGYSTWIQTAKPVKLTKDKLEIEVPASLHKAYWEKNLVTKVVEGVYEFAQLEVDPVIMTKDELQPAPATDQRPAVEEDDQNLTFKAKTHLNPKYTFDHFVIGKGNQMAHAAALAVAEAPGTTYNPLFIYGGVGLGKTHLMQAIGNLVLGNNPAANIKYVTSENFANDFINSIQTKQQEQFRQEYRNVDLLLVDDIQFFGDKEATQEEFFHTFNTLYENMKQIVLTSDRLPNEIPKLQERLVSRFNKGLSVDVTPPDLETRIAILRNKADAEDLSIPDDTLSYIAGQIESNVRDLEGALVRVQAFSTMKNEDITTSLAADALKALKLDDRSGQLTIPQILNAVAKYFQLTVQDLKGKKRVKQIVIPRQIAMYLAREMTDNSLPKIGQEIGGKDHTTVIHAHEKIMASMTTDENLKAQVIELRNILKNRG.

The segment at 1–72 is domain I, interacts with DnaA modulators; it reads MPNLEELWAY…VEGVYEFAQL (72 aa). Positions 72-109 are domain II; it reads LEVDPVIMTKDELQPAPATDQRPAVEEDDQNLTFKAKT. A domain III, AAA+ region region spans residues 110–326; the sequence is HLNPKYTFDH…GALVRVQAFS (217 aa). ATP-binding residues include Gly-154, Gly-156, Lys-157, and Thr-158. The domain IV, binds dsDNA stretch occupies residues 327–449; it reads TMKNEDITTS…ELRNILKNRG (123 aa).

This sequence belongs to the DnaA family. As to quaternary structure, oligomerizes as a right-handed, spiral filament on DNA at oriC.

It localises to the cytoplasm. Functionally, plays an essential role in the initiation and regulation of chromosomal replication. ATP-DnaA binds to the origin of replication (oriC) to initiate formation of the DNA replication initiation complex once per cell cycle. Binds the DnaA box (a 9 base pair repeat at the origin) and separates the double-stranded (ds)DNA. Forms a right-handed helical filament on oriC DNA; dsDNA binds to the exterior of the filament while single-stranded (ss)DNA is stabiized in the filament's interior. The ATP-DnaA-oriC complex binds and stabilizes one strand of the AT-rich DNA unwinding element (DUE), permitting loading of DNA polymerase. After initiation quickly degrades to an ADP-DnaA complex that is not apt for DNA replication. Binds acidic phospholipids. The chain is Chromosomal replication initiator protein DnaA from Lacticaseibacillus paracasei (strain ATCC 334 / BCRC 17002 / CCUG 31169 / CIP 107868 / KCTC 3260 / NRRL B-441) (Lactobacillus paracasei).